Consider the following 1040-residue polypeptide: Probable starch synthase 4, chloroplastic/amyloplastic (1040 aa).

The N-terminal 42 residues, 1–42 (MTTKLSSFCFLTHGLAGISCEREHGSSRRFFYLPSRRLVSTS), are a transit peptide targeting the chloroplast. The tract at residues 43 to 142 (CKMRQQRGFD…KSKTAKKKGE (100 aa)) is disordered. Basic and acidic residues-rich tracts occupy residues 52–61 (DSSKRQEVKK) and 112–124 (NHADENLEKKDDI). Residues 187 to 466 (ELMTMIRSAE…EESKKKSRDE (280 aa)) are a coiled coil. Residues Lys-556, Gly-559, and Asp-562 each coordinate ADP. (1,4-alpha-D-glucosyl)n is bound by residues Trp-679 and Gln-680. Residues Arg-849, Lys-854, Lys-906, Asp-908, Tyr-916, Leu-933, and Thr-934 each coordinate ADP.

This sequence belongs to the glycosyltransferase 1 family. Bacterial/plant glycogen synthase subfamily. In terms of assembly, interacts with PTST2. Interacts with PII1; the interaction is essential for the initiation of starch granules biosynthesis in leaf chloroplasts. In terms of tissue distribution, expressed in leaves and flowers.

The protein localises to the plastid. The protein resides in the chloroplast. Its subcellular location is the amyloplast. It is found in the chloroplast stroma. It carries out the reaction [(1-&gt;4)-alpha-D-glucosyl](n) + ADP-alpha-D-glucose = [(1-&gt;4)-alpha-D-glucosyl](n+1) + ADP + H(+). It participates in glycan biosynthesis; starch biosynthesis. Functionally, probably involved in the priming of starch granule formation. May play a regulatory role in the control of starch accumulation in plastids. Is necessary and sufficient to establish the correct number of starch granules observed in chloroplasts. This chain is Probable starch synthase 4, chloroplastic/amyloplastic, found in Arabidopsis thaliana (Mouse-ear cress).